We begin with the raw amino-acid sequence, 166 residues long: Small ribosomal subunit protein uS5 (166 aa).

An S5 DRBM domain is found at 11–74 (LREKLVAINR…EKARANMKRV (64 aa)).

Belongs to the universal ribosomal protein uS5 family. As to quaternary structure, part of the 30S ribosomal subunit. Contacts proteins S4 and S8.

Its function is as follows. With S4 and S12 plays an important role in translational accuracy. Functionally, located at the back of the 30S subunit body where it stabilizes the conformation of the head with respect to the body. The protein is Small ribosomal subunit protein uS5 of Alkalilimnicola ehrlichii (strain ATCC BAA-1101 / DSM 17681 / MLHE-1).